Here is a 258-residue protein sequence, read N- to C-terminus: MDLSIIVIGASGRMGKTIIQVAQEQGIIIDAVIDRPTRLTSLASYNIASDSEPDKIFSRYPQAVVIDFTTPETSISMAQVAQKYGNPIIIGTTGFTLEQFDTLETLAKTSRIFWSPNMSIGINVLLKTLPQMAQILGNEYNIEIVEVHHNKKKDAPSGTAMRIAETLSTSRHWDLEKVACYNREGIVGERPQEQIGIQTIRGGDVVGVHTIYFIGPGERIEITHQADSRKNFAQGALKAAEWIIKQKAGRLYTMMDII.

NAD(+) contacts are provided by residues 9-14 (GASGRM), 91-93 (GTT), and 115-118 (SPNM). Histidine 148 serves as the catalytic Proton donor/acceptor. Histidine 149 is a binding site for (S)-2,3,4,5-tetrahydrodipicolinate. The active-site Proton donor is lysine 152. 158–159 (GT) serves as a coordination point for (S)-2,3,4,5-tetrahydrodipicolinate.

It belongs to the DapB family.

It is found in the cytoplasm. It catalyses the reaction (S)-2,3,4,5-tetrahydrodipicolinate + NAD(+) + H2O = (2S,4S)-4-hydroxy-2,3,4,5-tetrahydrodipicolinate + NADH + H(+). The catalysed reaction is (S)-2,3,4,5-tetrahydrodipicolinate + NADP(+) + H2O = (2S,4S)-4-hydroxy-2,3,4,5-tetrahydrodipicolinate + NADPH + H(+). It participates in amino-acid biosynthesis; L-lysine biosynthesis via DAP pathway; (S)-tetrahydrodipicolinate from L-aspartate: step 4/4. Functionally, catalyzes the conversion of 4-hydroxy-tetrahydrodipicolinate (HTPA) to tetrahydrodipicolinate. This Lawsonia intracellularis (strain PHE/MN1-00) protein is 4-hydroxy-tetrahydrodipicolinate reductase.